The chain runs to 624 residues: 1-deoxy-D-xylulose-5-phosphate synthase (624 aa).

Thiamine diphosphate-binding positions include H80 and G121–S123. Mg(2+) is bound at residue D152. Thiamine diphosphate-binding positions include G153 to A154, N181, Y288, and E370. N181 lines the Mg(2+) pocket.

This sequence belongs to the transketolase family. DXPS subfamily. Homodimer. The cofactor is Mg(2+). It depends on thiamine diphosphate as a cofactor.

The catalysed reaction is D-glyceraldehyde 3-phosphate + pyruvate + H(+) = 1-deoxy-D-xylulose 5-phosphate + CO2. Its pathway is metabolic intermediate biosynthesis; 1-deoxy-D-xylulose 5-phosphate biosynthesis; 1-deoxy-D-xylulose 5-phosphate from D-glyceraldehyde 3-phosphate and pyruvate: step 1/1. In terms of biological role, catalyzes the acyloin condensation reaction between C atoms 2 and 3 of pyruvate and glyceraldehyde 3-phosphate to yield 1-deoxy-D-xylulose-5-phosphate (DXP). This chain is 1-deoxy-D-xylulose-5-phosphate synthase, found in Proteus mirabilis (strain HI4320).